The following is a 399-amino-acid chain: O-antigen polymerase (399 aa).

10 helical membrane passes run F4–V24, L37–F57, A64–L84, I97–L117, G151–M171, I185–V205, F222–F242, F309–A329, L353–S373, and S374–N394.

It localises to the cell inner membrane. It carries out the reaction n lipid-linked O-antigen repeat units = a lipid-linked O antigen + (n-1) polyisoprenyl diphosphate.. The protein operates within bacterial outer membrane biogenesis; LPS O-antigen biosynthesis. Polymerase involved in the biosynthesis of the lipopolysaccharide (LPS). Catalyzes the polymerization of the O-antigen repeat units on the periplasmic face of the inner membrane, leading to the formation of the lipid-linked O-antigen molecule. In Salmonella muenchen, this protein is O-antigen polymerase.